The sequence spans 204 residues: Shikimate kinase (204 aa).

Position 35-40 (35-40 (ASGKST)) interacts with ATP. S39 is a Mg(2+) binding site. Substrate-binding residues include D57, R81, and G103. R142 serves as a coordination point for ATP. Position 169 (R169) interacts with substrate.

This sequence belongs to the shikimate kinase family. Monomer. Mg(2+) is required as a cofactor.

It is found in the cytoplasm. The catalysed reaction is shikimate + ATP = 3-phosphoshikimate + ADP + H(+). It functions in the pathway metabolic intermediate biosynthesis; chorismate biosynthesis; chorismate from D-erythrose 4-phosphate and phosphoenolpyruvate: step 5/7. In terms of biological role, catalyzes the specific phosphorylation of the 3-hydroxyl group of shikimic acid using ATP as a cosubstrate. The polypeptide is Shikimate kinase (Salinibacter ruber (strain DSM 13855 / M31)).